The sequence spans 117 residues: MSQRAIGAGYELQARHYLERAGLTFCAANVALRGGELDLIMRDGQTWVFVEVRYRRSDAFGGAAASVTYRKQQRLLHAAAVWLAGRGASFDTSSCRFDVLAITGSQLEWIPNAFNAD.

Belongs to the UPF0102 family.

In Serratia proteamaculans (strain 568), this protein is UPF0102 protein Spro_4337.